The primary structure comprises 135 residues: MRHGKVHRKLNRTAEHRKAMFANMCASLIKHEQIVTTLPKAKELRPIVEKLVTLGKKGGLALRRQAISEMKDQDQVRKLFDVLAKRYADRQGGYTRIIKAGFRYGDNAPMAVIEFVDRDENAKGLDSGQAEEKAA.

The protein belongs to the bacterial ribosomal protein bL17 family. In terms of assembly, part of the 50S ribosomal subunit. Contacts protein L32.

This chain is Large ribosomal subunit protein bL17, found in Rhodopseudomonas palustris (strain BisB18).